Reading from the N-terminus, the 60-residue chain is MFVWGLFCILRIALKPDRKYAVRLISKTAISSSGRADDNQDCCMVRGSRPRWRSNFSKLF.

Functionally, controls the expression of small non-coding RNA GcvB, which represses the expression of many amino acid transporter proteins and uptake of aminoglycoside antibiotics in cells. Might be a transcriptional activator. An RNA (xtr) with a tRNA-like fold possibly derived from tRNA-Arg(UCG) is encoded entirely within the protein; xtr does not have the sequence corresponding to tRNA anticodon or variable arms. 10 synonymous codon changes in the xtr region of xtpA have the same phenotype as a deletion mutation, suggesting the mRNA secondary structure is important for function. In Escherichia coli (strain K12), this protein is Putative transcriptional regulator XtpA.